We begin with the raw amino-acid sequence, 267 residues long: Tryptophan synthase alpha chain (267 aa).

Catalysis depends on proton acceptor residues Glu-49 and Asp-60.

It belongs to the TrpA family. In terms of assembly, tetramer of two alpha and two beta chains.

The catalysed reaction is (1S,2R)-1-C-(indol-3-yl)glycerol 3-phosphate + L-serine = D-glyceraldehyde 3-phosphate + L-tryptophan + H2O. The protein operates within amino-acid biosynthesis; L-tryptophan biosynthesis; L-tryptophan from chorismate: step 5/5. In terms of biological role, the alpha subunit is responsible for the aldol cleavage of indoleglycerol phosphate to indole and glyceraldehyde 3-phosphate. The sequence is that of Tryptophan synthase alpha chain from Salinispora tropica (strain ATCC BAA-916 / DSM 44818 / JCM 13857 / NBRC 105044 / CNB-440).